The sequence spans 1249 residues: Hyphally regulated cell wall protein 3 (1249 aa).

The first 20 residues, 1–20 (MHLFKRIALTLWLIISSTLA), serve as a signal peptide directing secretion. An N-linked (GlcNAc...) asparagine glycan is attached at Asn373. Over residues 383–415 (FPTTSQSSSSETVASSSQPDSSSTEPSAFPSST) the composition is skewed to low complexity. Disordered stretches follow at residues 383 to 729 (FPTT…SGII) and 883 to 1217 (GLST…SSAS). The span at 416–428 (GDSSAEPSITSDY) shows a compositional bias: polar residues. Over residues 429 to 716 (SSSELSVVPS…SEYTATWTTT (288 aa)) the composition is skewed to low complexity. N-linked (GlcNAc...) asparagine glycosylation occurs at Asn681. Polar residues-rich tracts occupy residues 717–729 (NSDGSVSTESGII) and 883–935 (GLST…PVPT). Asn891, Asn940, Asn944, Asn948, Asn952, Asn956, Asn960, Asn966, Asn970, Asn974, Asn984, Asn988, Asn992, Asn996, Asn1000, Asn1010, Asn1014, Asn1018, Asn1022, Asn1026, Asn1032, Asn1046, Asn1050, Asn1058, Asn1062, Asn1072, Asn1076, Asn1080, Asn1086, Asn1090, Asn1094, Asn1098, Asn1114, Asn1118, Asn1122, Asn1128, Asn1132, Asn1136, Asn1140, Asn1150, Asn1154, Asn1158, Asn1172, Asn1180, and Asn1186 each carry an N-linked (GlcNAc...) asparagine glycan. Over residues 941-959 (GSNNGSDNGSNNGSNNGSN) the composition is skewed to low complexity. A compositionally biased stretch (gly residues) spans 960 to 982 (NGSGSGNGSNNGSNNGSGSGNGF). Low complexity predominate over residues 983-1043 (NNGSDNGSNN…SNSGSDSGNG (61 aa)). The segment covering 1062 to 1078 (NGSGSGGESNNGSGNGS) has biased composition (gly residues). The span at 1079-1097 (DNGSSPDNGSNNGSNNGSN) shows a compositional bias: low complexity. Low complexity predominate over residues 1139 to 1167 (NNGSNSGSNSDNGSNNSSGNGSSSDLGSV). Low complexity-rich tracts occupy residues 1175 to 1194 (NEGSSNESGANNGSNNGAGA) and 1205 to 1217 (SPSADSGSTSSAS). N-linked (GlcNAc...) asparagine glycosylation is present at Asn1225. Residue Asn1225 is the site of GPI-anchor amidated asparagine attachment. The propeptide at 1226–1249 (GSGKLLNGKVLTLSVLSSMVVVFL) is removed in mature form.

The protein belongs to the HYR1/IFF family. The GPI-anchor is attached to the protein in the endoplasmic reticulum and serves to target the protein to the cell surface. There, the glucosamine-inositol phospholipid moiety is cleaved off and the GPI-modified mannoprotein is covalently attached via its lipidless GPI glycan remnant to the 1,6-beta-glucan of the outer cell wall layer.

The protein resides in the secreted. It is found in the cell wall. The protein localises to the membrane. In terms of biological role, GPI-anchored cell wall protein involved in cell wall organization, hyphal growth, as well as in host-fungal interaction and virulence. The chain is Hyphally regulated cell wall protein 3 (HYR3) from Candida albicans (strain SC5314 / ATCC MYA-2876) (Yeast).